The chain runs to 43 residues: Potassium channel toxin gamma-KTx 4.1 (43 aa).

Disulfide bonds link cysteine 5–cysteine 23, cysteine 11–cysteine 34, cysteine 20–cysteine 39, and cysteine 24–cysteine 41.

It belongs to the ergtoxin family. Gamma-KTx 4 subfamily. As to expression, expressed by the venom gland.

The protein resides in the secreted. Its function is as follows. Reversibly blocks Kv11/ERG potassium channels. This chain is Potassium channel toxin gamma-KTx 4.1, found in Centruroides limpidus (Mexican scorpion).